Reading from the N-terminus, the 181-residue chain is Inner membrane-spanning protein YciB (181 aa).

Transmembrane regions (helical) follow at residues 8-28, 53-73, 76-96, 121-141, and 149-169; these read FPII…ATAA, ITLI…NAIF, WKPT…HFFG, LSWA…VYNF, and FKLF…AFYI.

Belongs to the YciB family.

It localises to the cell inner membrane. In terms of biological role, plays a role in cell envelope biogenesis, maintenance of cell envelope integrity and membrane homeostasis. The protein is Inner membrane-spanning protein YciB of Coxiella burnetii (strain CbuK_Q154) (Coxiella burnetii (strain Q154)).